The following is a 558-amino-acid chain: Dihydroxy-acid dehydratase (558 aa).

D78 contacts Mg(2+). [2Fe-2S] cluster is bound at residue C119. Residues D120 and K121 each contribute to the Mg(2+) site. K121 carries the post-translational modification N6-carboxylysine. C192 contacts [2Fe-2S] cluster. Residue E446 coordinates Mg(2+). The Proton acceptor role is filled by S472.

It belongs to the IlvD/Edd family. Homodimer. [2Fe-2S] cluster is required as a cofactor. It depends on Mg(2+) as a cofactor.

It catalyses the reaction (2R)-2,3-dihydroxy-3-methylbutanoate = 3-methyl-2-oxobutanoate + H2O. It carries out the reaction (2R,3R)-2,3-dihydroxy-3-methylpentanoate = (S)-3-methyl-2-oxopentanoate + H2O. The protein operates within amino-acid biosynthesis; L-isoleucine biosynthesis; L-isoleucine from 2-oxobutanoate: step 3/4. It functions in the pathway amino-acid biosynthesis; L-valine biosynthesis; L-valine from pyruvate: step 3/4. Its function is as follows. Functions in the biosynthesis of branched-chain amino acids. Catalyzes the dehydration of (2R,3R)-2,3-dihydroxy-3-methylpentanoate (2,3-dihydroxy-3-methylvalerate) into 2-oxo-3-methylpentanoate (2-oxo-3-methylvalerate) and of (2R)-2,3-dihydroxy-3-methylbutanoate (2,3-dihydroxyisovalerate) into 2-oxo-3-methylbutanoate (2-oxoisovalerate), the penultimate precursor to L-isoleucine and L-valine, respectively. This Campylobacter jejuni subsp. jejuni serotype O:2 (strain ATCC 700819 / NCTC 11168) protein is Dihydroxy-acid dehydratase.